The following is a 1129-amino-acid chain: Ubiquitin carboxyl-terminal hydrolase 7 (1129 aa).

One can recognise an MATH domain in the interval E29 to F169. Residues I190–D500 form the USP domain. C199 serves as the catalytic Nucleophile. Catalysis depends on H439, which acts as the Proton acceptor.

Belongs to the peptidase C19 family.

The protein resides in the nucleus. It catalyses the reaction Thiol-dependent hydrolysis of ester, thioester, amide, peptide and isopeptide bonds formed by the C-terminal Gly of ubiquitin (a 76-residue protein attached to proteins as an intracellular targeting signal).. Functionally, hydrolase that deubiquitinates target proteins. The sequence is that of Ubiquitin carboxyl-terminal hydrolase 7 from Caenorhabditis briggsae.